Here is a 223-residue protein sequence, read N- to C-terminus: Ribosomal RNA small subunit methyltransferase G (223 aa).

S-adenosyl-L-methionine is bound by residues Gly90, Leu95, 141 to 142 (VE), and Arg156.

This sequence belongs to the methyltransferase superfamily. RNA methyltransferase RsmG family.

The protein resides in the cytoplasm. The enzyme catalyses guanosine(527) in 16S rRNA + S-adenosyl-L-methionine = N(7)-methylguanosine(527) in 16S rRNA + S-adenosyl-L-homocysteine. Its function is as follows. Specifically methylates the N7 position of guanine in position 527 of 16S rRNA. The chain is Ribosomal RNA small subunit methyltransferase G from Ralstonia nicotianae (strain ATCC BAA-1114 / GMI1000) (Ralstonia solanacearum).